A 226-amino-acid chain; its full sequence is UPF0758 protein Daci_1904 (226 aa).

The region spanning 104–226 is the MPN domain; it reads ALASPEAVAR…SLSMAGQGML (123 aa). Zn(2+)-binding residues include His175, His177, and Asp188. Residues 175–188 carry the JAMM motif motif; it reads HNHPSGQVQASAAD.

Belongs to the UPF0758 family.

In Delftia acidovorans (strain DSM 14801 / SPH-1), this protein is UPF0758 protein Daci_1904.